We begin with the raw amino-acid sequence, 364 residues long: UDP-N-acetylglucosamine--N-acetylmuramyl-(pentapeptide) pyrophosphoryl-undecaprenol N-acetylglucosamine transferase (364 aa).

Residues 10 to 12, asparagine 124, arginine 166, serine 196, isoleucine 252, and glutamine 297 contribute to the UDP-N-acetyl-alpha-D-glucosamine site; that span reads TGG.

The protein belongs to the glycosyltransferase 28 family. MurG subfamily.

It is found in the cell membrane. The catalysed reaction is di-trans,octa-cis-undecaprenyl diphospho-N-acetyl-alpha-D-muramoyl-L-alanyl-D-glutamyl-meso-2,6-diaminopimeloyl-D-alanyl-D-alanine + UDP-N-acetyl-alpha-D-glucosamine = di-trans,octa-cis-undecaprenyl diphospho-[N-acetyl-alpha-D-glucosaminyl-(1-&gt;4)]-N-acetyl-alpha-D-muramoyl-L-alanyl-D-glutamyl-meso-2,6-diaminopimeloyl-D-alanyl-D-alanine + UDP + H(+). Its pathway is cell wall biogenesis; peptidoglycan biosynthesis. Cell wall formation. Catalyzes the transfer of a GlcNAc subunit on undecaprenyl-pyrophosphoryl-MurNAc-pentapeptide (lipid intermediate I) to form undecaprenyl-pyrophosphoryl-MurNAc-(pentapeptide)GlcNAc (lipid intermediate II). The sequence is that of UDP-N-acetylglucosamine--N-acetylmuramyl-(pentapeptide) pyrophosphoryl-undecaprenol N-acetylglucosamine transferase from Ruminiclostridium cellulolyticum (strain ATCC 35319 / DSM 5812 / JCM 6584 / H10) (Clostridium cellulolyticum).